We begin with the raw amino-acid sequence, 341 residues long: Biotin synthase (341 aa).

The Radical SAM core domain maps to 40–267 (AEIQVSTLLS…RSMVRLSAGR (228 aa)). Cys-55, Cys-59, and Cys-62 together coordinate [4Fe-4S] cluster. 4 residues coordinate [2Fe-2S] cluster: Cys-99, Cys-130, Cys-190, and Arg-262.

This sequence belongs to the radical SAM superfamily. Biotin synthase family. As to quaternary structure, homodimer. The cofactor is [4Fe-4S] cluster. [2Fe-2S] cluster is required as a cofactor.

The enzyme catalyses (4R,5S)-dethiobiotin + (sulfur carrier)-SH + 2 reduced [2Fe-2S]-[ferredoxin] + 2 S-adenosyl-L-methionine = (sulfur carrier)-H + biotin + 2 5'-deoxyadenosine + 2 L-methionine + 2 oxidized [2Fe-2S]-[ferredoxin]. The protein operates within cofactor biosynthesis; biotin biosynthesis; biotin from 7,8-diaminononanoate: step 2/2. Functionally, catalyzes the conversion of dethiobiotin (DTB) to biotin by the insertion of a sulfur atom into dethiobiotin via a radical-based mechanism. This is Biotin synthase from Xylella fastidiosa (strain 9a5c).